The following is a 90-amino-acid chain: Small ribosomal subunit protein uS15 (90 aa).

Belongs to the universal ribosomal protein uS15 family. In terms of assembly, part of the 30S ribosomal subunit. Forms a bridge to the 50S subunit in the 70S ribosome, contacting the 23S rRNA.

Functionally, one of the primary rRNA binding proteins, it binds directly to 16S rRNA where it helps nucleate assembly of the platform of the 30S subunit by binding and bridging several RNA helices of the 16S rRNA. Forms an intersubunit bridge (bridge B4) with the 23S rRNA of the 50S subunit in the ribosome. This chain is Small ribosomal subunit protein uS15, found in Helicobacter hepaticus (strain ATCC 51449 / 3B1).